The primary structure comprises 220 residues: Thiopurine S-methyltransferase (220 aa).

W10, L45, E66, and R123 together coordinate S-adenosyl-L-methionine.

Belongs to the class I-like SAM-binding methyltransferase superfamily. TPMT family.

It is found in the cytoplasm. It carries out the reaction S-adenosyl-L-methionine + a thiopurine = S-adenosyl-L-homocysteine + a thiopurine S-methylether.. The chain is Thiopurine S-methyltransferase from Nitrosospira multiformis (strain ATCC 25196 / NCIMB 11849 / C 71).